The following is a 302-amino-acid chain: MIRKYNLYQIDSFTKEKFTGNPAGVITNADGLTDYEMQKIARELNNSETAFIFSSKDERYDAWVRFFTPTSEVPICGHATIAAHYARAIENNLETSRVYHKTGAGILPVDVIKENDDYKIIMTQGKIEFGSVIDGEKKEKLLRALNIEKSDLLENYKIQIVSTGHSKVMIGIKSLKTLNKLQPNYDVLSKLSKIIKCNGYYVFAVTSEDSDILIHGRMFAPAIGINEDPVTGNANGPLGAYLVHHKLACYDNSIFKFKAKQGEAIGRQGIIEVEVRVDKEEPVEVKISGNAVVVFKSELVLN.

Glutamate 48 is a catalytic residue.

The protein belongs to the PhzF family.

This is an uncharacterized protein from Clostridium acetobutylicum (strain ATCC 824 / DSM 792 / JCM 1419 / IAM 19013 / LMG 5710 / NBRC 13948 / NRRL B-527 / VKM B-1787 / 2291 / W).